The following is a 121-amino-acid chain: Basic phospholipase A2 homolog BaTX (121 aa).

7 cysteine pairs are disulfide-bonded: Cys26-Cys115, Cys28-Cys44, Cys43-Cys95, Cys49-Cys121, Cys50-Cys88, Cys57-Cys81, and Cys75-Cys86. The segment at 105–117 (KKYRYYLKPLCKK) is important for membrane-damaging activities in eukaryotes and bacteria; heparin-binding.

Belongs to the phospholipase A2 family. Group II subfamily. K49 sub-subfamily. As to quaternary structure, homodimer; non-covalently linked. In terms of tissue distribution, expressed by the venom gland.

It localises to the secreted. Snake venom phospholipase A2 homolog that lacks enzymatic activity. Is myotoxic and displays edema-inducing activities. In vitro, produced time-dependent, irreversible neuromuscular blockade in isolated mouse phrenic nerve-diaphragm and chick biventer cervicis preparations. A model of myotoxic mechanism has been proposed: an apo Lys49-PLA2 is activated by the entrance of a hydrophobic molecule (e.g. fatty acid) at the hydrophobic channel of the protein leading to a reorientation of a monomer. This reorientation causes a transition between 'inactive' to 'active' states, causing alignment of C-terminal and membrane-docking sites (MDoS) side-by-side and putting the membrane-disruption sites (MDiS) in the same plane, exposed to solvent and in a symmetric position for both monomers. The MDoS region stabilizes the toxin on membrane by the interaction of charged residues with phospholipid head groups. Subsequently, the MDiS region destabilizes the membrane with penetration of hydrophobic residues. This insertion causes a disorganization of the membrane, allowing an uncontrolled influx of ions (i.e. calcium and sodium), and eventually triggering irreversible intracellular alterations and cell death. This chain is Basic phospholipase A2 homolog BaTX, found in Bothrops alternatus (Urutu).